Consider the following 120-residue polypeptide: NAD(P)H-quinone oxidoreductase subunit 3 (120 aa).

The next 3 membrane-spanning stretches (helical) occupy residues 6–26 (GYDA…LALV), 64–84 (MFAL…PWAV), and 89–109 (LGLL…VALA).

This sequence belongs to the complex I subunit 3 family. NDH-1 can be composed of about 15 different subunits; different subcomplexes with different compositions have been identified which probably have different functions.

The protein resides in the cellular thylakoid membrane. It carries out the reaction a plastoquinone + NADH + (n+1) H(+)(in) = a plastoquinol + NAD(+) + n H(+)(out). The catalysed reaction is a plastoquinone + NADPH + (n+1) H(+)(in) = a plastoquinol + NADP(+) + n H(+)(out). In terms of biological role, NDH-1 shuttles electrons from an unknown electron donor, via FMN and iron-sulfur (Fe-S) centers, to quinones in the respiratory and/or the photosynthetic chain. The immediate electron acceptor for the enzyme in this species is believed to be plastoquinone. Couples the redox reaction to proton translocation, and thus conserves the redox energy in a proton gradient. Cyanobacterial NDH-1 also plays a role in inorganic carbon-concentration. The chain is NAD(P)H-quinone oxidoreductase subunit 3 from Prochlorococcus marinus (strain MIT 9211).